The primary structure comprises 104 residues: Thioredoxin (104 aa).

The Thioredoxin domain maps to 2–104; that stretch reads AIVKVTDADF…NLAEVLDKHL (103 aa). A disulfide bridge links Cys29 with Cys32.

It belongs to the thioredoxin family.

Functionally, component of the thioredoxin-thioredoxin reductase system. Participates in various redox reactions through the reversible oxidation of its active center dithiol to a disulfide and catalyzes dithiol-disulfide exchange reactions. The sequence is that of Thioredoxin (trxA) from Staphylococcus aureus (strain N315).